The following is a 289-amino-acid chain: ATP synthase gamma chain (289 aa).

This sequence belongs to the ATPase gamma chain family. In terms of assembly, F-type ATPases have 2 components, CF(1) - the catalytic core - and CF(0) - the membrane proton channel. CF(1) has five subunits: alpha(3), beta(3), gamma(1), delta(1), epsilon(1). CF(0) has three main subunits: a, b and c.

It is found in the cell inner membrane. Its function is as follows. Produces ATP from ADP in the presence of a proton gradient across the membrane. The gamma chain is believed to be important in regulating ATPase activity and the flow of protons through the CF(0) complex. This is ATP synthase gamma chain from Leptospira biflexa serovar Patoc (strain Patoc 1 / ATCC 23582 / Paris).